Here is an 808-residue protein sequence, read N- to C-terminus: Phenylalanine--tRNA ligase beta subunit (808 aa).

The tRNA-binding domain occupies 40–149 (RPELDFVKIV…DQAEVGKTIR (110 aa)). The B5 domain maps to 407–484 (HKEVRIHTDI…RTKGYDTIQV (78 aa)). Residues Asp462, Asp468, Glu471, and Glu472 each coordinate Mg(2+). Residues 716-808 (SQFPEAEIDL…LAGKNGFVLR (93 aa)) form the FDX-ACB domain.

It belongs to the phenylalanyl-tRNA synthetase beta subunit family. Type 1 subfamily. As to quaternary structure, tetramer of two alpha and two beta subunits. The cofactor is Mg(2+).

It localises to the cytoplasm. The enzyme catalyses tRNA(Phe) + L-phenylalanine + ATP = L-phenylalanyl-tRNA(Phe) + AMP + diphosphate + H(+). This Leptospira interrogans serogroup Icterohaemorrhagiae serovar Lai (strain 56601) protein is Phenylalanine--tRNA ligase beta subunit.